The following is a 209-amino-acid chain: Protein Bel-1 (209 aa).

Disordered regions lie at residues 1–30 (MASK…LDLT), 123–143 (FLNS…PATS), and 156–185 (CSRP…GESG). Polar residues-rich tracts occupy residues 21-30 (SHSTSGLDLT) and 132-143 (TPKTDPTRPATS).

Functionally, transcriptional transactivator that activates the viral internal promoter (IP), thereby enhancing its own expression. This transactivation is repressed by nuclear factor I. Also transactivates the long terminal repeat (LTR) promoter, thereby inducing structural gene expression, initiating the late phase of infection. It is therefore a key regulator of viral gene expression. It directly binds to and activates DNA target sites of viral promoters and those of distinct cellular genes. Required for viral replication. This chain is Protein Bel-1 (bel1), found in Felis catus (Cat).